The primary structure comprises 123 residues: Putative outer membrane protein CPn_0818/CP_1053/CPj0818/CpB0847 (123 aa).

A signal peptide spans 1-30 (MKRQKRKQSITLIEMMVVITLIGIIGGALA).

It is found in the cell outer membrane. This is Putative outer membrane protein CPn_0818/CP_1053/CPj0818/CpB0847 from Chlamydia pneumoniae (Chlamydophila pneumoniae).